A 66-amino-acid chain; its full sequence is Large ribosomal subunit protein bL33c (66 aa).

Belongs to the bacterial ribosomal protein bL33 family.

The protein resides in the plastid. The protein localises to the chloroplast. The protein is Large ribosomal subunit protein bL33c of Crucihimalaya wallichii (Rock-cress).